The chain runs to 566 residues: Liver carboxylesterase 1 (566 aa).

The signal sequence occupies residues 1–18 (MWLRALVLATLAAFTAWG). A glycan (N-linked (GlcNAc...) asparagine) is linked at Asn79. A disulfide bridge connects residues Cys87 and Cys116. Residue Ser221 is the Acyl-ester intermediate of the active site. Cysteines 274 and 285 form a disulfide. Glu354 serves as the catalytic Charge relay system. Ser379 carries the post-translational modification Phosphoserine. Catalysis depends on His467, which acts as the Charge relay system.

Belongs to the type-B carboxylesterase/lipase family. In terms of assembly, homotrimer and homohexamer. Binds to beta-glucuronidase.

The protein localises to the endoplasmic reticulum lumen. Its subcellular location is the cytoplasm. It is found in the lipid droplet. It carries out the reaction a carboxylic ester + H2O = an alcohol + a carboxylate + H(+). The enzyme catalyses cholesteryl (9Z-octadecenoate) + H2O = cholesterol + (9Z)-octadecenoate + H(+). The catalysed reaction is 2-(5Z,8Z,11Z,14Z-eicosatetraenoyl)-glycerol + H2O = glycerol + (5Z,8Z,11Z,14Z)-eicosatetraenoate + H(+). It catalyses the reaction prostaglandin E2 1-glyceryl ester + H2O = prostaglandin E2 + glycerol + H(+). It carries out the reaction a cholesterol ester + H2O = cholesterol + a fatty acid + H(+). The enzyme catalyses prostaglandin F2alpha 1-glyceryl ester + H2O = prostaglandin F2alpha + glycerol + H(+). Its function is as follows. Involved in the detoxification of xenobiotics and in the activation of ester and amide prodrugs. Hydrolyzes aromatic and aliphatic esters, but has no catalytic activity toward amides or a fatty acyl-CoA ester. Displays fatty acid ethyl ester synthase activity, catalyzing the ethyl esterification of oleic acid to ethyloleate. Converts monoacylglycerides to free fatty acids and glycerol. Hydrolyzes of 2-arachidonoylglycerol and prostaglandins. Hydrolyzes cellular cholesteryl esters to free cholesterols and promotes reverse cholesterol transport (RCT) by facilitating both the initial and final steps in the process. First of all, allows free cholesterol efflux from macrophages to extracellular cholesterol acceptors and secondly, releases free cholesterol from lipoprotein-delivered cholesteryl esters in the liver for bile acid synthesis or direct secretion into the bile. This is Liver carboxylesterase 1 from Macaca fascicularis (Crab-eating macaque).